Here is a 413-residue protein sequence, read N- to C-terminus: ATP-dependent (S)-NAD(P)H-hydrate dehydratase (413 aa).

The region spanning 98 to 402 (NLNHFLSYVP…KSVPNALVWG (305 aa)) is the YjeF C-terminal domain. Residues Gly-199 and 252–258 (NFVEYRA) contribute to the (6S)-NADPHX site. ATP is bound by residues 292 to 296 (KGQED) and 311 to 320 (GMPRRCGGQG). Residue Asp-321 participates in (6S)-NADPHX binding.

The protein belongs to the NnrD/CARKD family. It depends on Mg(2+) as a cofactor.

It catalyses the reaction (6S)-NADHX + ATP = ADP + phosphate + NADH + H(+). The enzyme catalyses (6S)-NADPHX + ATP = ADP + phosphate + NADPH + H(+). In terms of biological role, catalyzes the dehydration of the S-form of NAD(P)HX at the expense of ATP, which is converted to ADP. Together with NAD(P)HX epimerase, which catalyzes the epimerization of the S- and R-forms, the enzyme allows the repair of both epimers of NAD(P)HX, a damaged form of NAD(P)H that is a result of enzymatic or heat-dependent hydration. In Heterostelium pallidum (strain ATCC 26659 / Pp 5 / PN500) (Cellular slime mold), this protein is ATP-dependent (S)-NAD(P)H-hydrate dehydratase.